We begin with the raw amino-acid sequence, 65 residues long: Large ribosomal subunit protein bL28 (65 aa).

The protein belongs to the bacterial ribosomal protein bL28 family.

This is Large ribosomal subunit protein bL28 from Lachnoclostridium phytofermentans (strain ATCC 700394 / DSM 18823 / ISDg) (Clostridium phytofermentans).